We begin with the raw amino-acid sequence, 640 residues long: Sodium-dependent nutrient amino acid transporter 1 (640 aa).

Low complexity predominate over residues 1–13 (MELKPNGNHNNNN). Residues 1-25 (MELKPNGNHNNNNAAEKSEDTEKAK) form a disordered region. The Cytoplasmic portion of the chain corresponds to 1–30 (MELKPNGNHNNNNAAEKSEDTEKAKAERTN). Positions 16–25 (EKSEDTEKAK) are enriched in basic and acidic residues. 3 helical membrane passes run 31-51 (WGNG…LGNV), 64-84 (GAFL…MYYL), and 117-137 (TICI…YLFV). N-linked (GlcNAc...) asparagine glycans are attached at residues asparagine 174, asparagine 181, and asparagine 197. Helical transmembrane passes span 228–248 (PDWK…LVIM), 257–277 (AAYF…IRAV), 306–326 (AVVQ…MFAS), 340–360 (IVTT…FAIL), 400–420 (LFSV…IVAL), 447–467 (CGFL…LTLV), 473–493 (TYVV…IYGL), 515–535 (CWSF…MVTI), and 551–571 (VAGW…GLWY).

This sequence belongs to the sodium:neurotransmitter symporter (SNF) (TC 2.A.22) family.

The protein resides in the membrane. In terms of biological role, unusual broad substrate spectrum amino acid:sodium cotransporter that promotes absorption of the D isomers of essential amino acids. Neutral amino acids are the preferred substrates, especially methionine and phenylalanine. This is Sodium-dependent nutrient amino acid transporter 1 from Drosophila ananassae (Fruit fly).